Here is a 273-residue protein sequence, read N- to C-terminus: Dermonecrotic toxin LdSicTox-alphaIB3aiii (273 aa).

The active site involves His5. Mg(2+)-binding residues include Glu25 and Asp27. His41 serves as the catalytic Nucleophile. 2 disulfides stabilise this stretch: Cys45–Cys51 and Cys47–Cys190. Asp85 contributes to the Mg(2+) binding site.

Belongs to the arthropod phospholipase D family. Class II subfamily. The cofactor is Mg(2+). Expressed by the venom gland.

It localises to the secreted. The catalysed reaction is an N-(acyl)-sphingosylphosphocholine = an N-(acyl)-sphingosyl-1,3-cyclic phosphate + choline. The enzyme catalyses an N-(acyl)-sphingosylphosphoethanolamine = an N-(acyl)-sphingosyl-1,3-cyclic phosphate + ethanolamine. It carries out the reaction a 1-acyl-sn-glycero-3-phosphocholine = a 1-acyl-sn-glycero-2,3-cyclic phosphate + choline. It catalyses the reaction a 1-acyl-sn-glycero-3-phosphoethanolamine = a 1-acyl-sn-glycero-2,3-cyclic phosphate + ethanolamine. Functionally, dermonecrotic toxins cleave the phosphodiester linkage between the phosphate and headgroup of certain phospholipids (sphingolipid and lysolipid substrates), forming an alcohol (often choline) and a cyclic phosphate. This toxin acts on sphingomyelin (SM). It may also act on ceramide phosphoethanolamine (CPE), lysophosphatidylcholine (LPC) and lysophosphatidylethanolamine (LPE), but not on lysophosphatidylserine (LPS), and lysophosphatidylglycerol (LPG). It acts by transphosphatidylation, releasing exclusively cyclic phosphate products as second products. Induces dermonecrosis, hemolysis, increased vascular permeability, edema, inflammatory response, and platelet aggregation. The sequence is that of Dermonecrotic toxin LdSicTox-alphaIB3aiii from Loxosceles deserta (Desert recluse spider).